Here is a 554-residue protein sequence, read N- to C-terminus: DnaJ homolog subfamily C member 1 (554 aa).

An N-terminal signal peptide occupies residues 1 to 47; sequence MTAPCSQPAQLPGRRQLGLVPFPPPPPRTPLLWLLLLLLAAVAPARG. Residues 48–153 lie on the Lumenal side of the membrane; sequence WESGDLELFD…RRVRKMSNAE (106 aa). Positions 65–129 constitute a J domain; sequence NFYQFLGVQQ…ERRQRYDDIL (65 aa). Residues 154-174 traverse the membrane as a helical segment; the sequence is LALLLFIILTVGHYAVVWSIY. Topologically, residues 175 to 554 are cytoplasmic; it reads LEKQLDELLS…LVQKKKQAKS (380 aa). The SANT 1 domain occupies 325 to 379; sequence KQAPEWTEEDLSQLTRSMVKFPGGTPGRWEKIAHELGRSVTDVTTKAKQLKDSVT. Serine 381 carries the phosphoserine modification. Over residues 392–405 the composition is skewed to polar residues; that stretch reads STVQNSRPIKTATT. The segment at 392 to 500 is disordered; that stretch reads STVQNSRPIK…RSAEEPWTQN (109 aa). The span at 421-432 shows a compositional bias: acidic residues; sequence AAEEEQEGDSGE. Serine 430 is subject to Phosphoserine. A compositionally biased stretch (basic and acidic residues) spans 455-472; that stretch reads AKPEPEEKSRAKRQKDFD. A compositionally biased stretch (acidic residues) spans 473-482; it reads IAEQNESSDE. 4 positions are modified to phosphoserine: serine 479, serine 480, serine 484, and serine 492. The span at 483–494 shows a compositional bias: basic and acidic residues; sequence ESLRKERARSAE. In terms of domain architecture, SANT 2 spans 492–547; it reads SAEEPWTQNQQKLLELALQQYPRGSSDRWDKIARCVPSKSKEDCIARYKLLVELVQ.

In terms of assembly, interacts (via J domain) with HSPA5. Interacts (via cytosolic domain) with ribosomes. Interacts (via SANT 2 domain) with SERPINA3; the interaction delays the formation of the covalent inhibitory complex SERPINA3-chymotrypsin, but does not alter the catalytic activity of SERPINA3. Interacts (via SANT 2 domain) with ITIH4 (via C-terminus); the interaction protects ITIH4 against in vitro cleavage by kallikrein.

It is found in the endoplasmic reticulum membrane. It localises to the nucleus membrane. The protein resides in the microsome membrane. In terms of biological role, may modulate protein synthesis. The sequence is that of DnaJ homolog subfamily C member 1 (DNAJC1) from Homo sapiens (Human).